A 498-amino-acid polypeptide reads, in one-letter code: Phosphonates import ATP-binding protein PhnC (498 aa).

The disordered stretch occupies residues 1–27; it reads MPQRPEAARAGPVAGPDAASKPAPGPA. The region spanning 28–269 is the ABC transporter domain; the sequence is LTLRGAGRAY…DLGELYEARR (242 aa). 60 to 67 contacts ATP; the sequence is GPSGAGKS. Residues 270-498 form a lysR substrate binding domain region; sequence GAADPARAPA…LEVARAEVPP (229 aa).

This sequence belongs to the ABC transporter superfamily. Phosphonates importer (TC 3.A.1.9.1) family. The complex is composed of two ATP-binding proteins (PhnC), two transmembrane proteins (PhnE) and a solute-binding protein (PhnD).

It localises to the cell inner membrane. The catalysed reaction is phosphonate(out) + ATP + H2O = phosphonate(in) + ADP + phosphate + H(+). Part of the ABC transporter complex PhnCDE involved in phosphonates import. Responsible for energy coupling to the transport system. The sequence is that of Phosphonates import ATP-binding protein PhnC from Anaeromyxobacter dehalogenans (strain 2CP-C).